A 564-amino-acid chain; its full sequence is Nucleoprotein (564 aa).

Residues 54–236 are binding site for the cap structure m7GTP; the sequence is LRKTKRGEED…VTKDESSINI (183 aa). The Mn(2+) site is built by D380 and E382. 4 residues coordinate Zn(2+): E390, C497, H500, and C525. D529 contributes to the Mn(2+) binding site.

The protein belongs to the arenaviridae nucleocapsid protein family. As to quaternary structure, homomultimerizes to form the nucleocapsid. Binds to viral genomic RNA. Interacts with glycoprotein G2. Interacts with protein Z; this interaction probably directs the encapsidated genome to budding sites. Interacts with protein L; this interaction does not interfere with Z-L interaction. Interacts with host IKBKE (via Protein kinase domain); the interaction inhibits IKBKE kinase activity.

The protein localises to the virion. Its subcellular location is the host cytoplasm. In terms of biological role, encapsidates the genome, protecting it from nucleases. The encapsidated genomic RNA is termed the nucleocapsid (NC). Serves as template for viral transcription and replication. The increased presence of protein N in host cell does not seem to trigger the switch from transcription to replication as observed in other negative strain RNA viruses. Through the interaction with host IKBKE, strongly inhibits the phosphorylation and nuclear translocation of host IRF3, a protein involved in interferon activation pathway, leading to the inhibition of interferon-beta and IRF3-dependent promoters activation. Also encodes a functional 3'-5' exoribonuclease that degrades preferentially dsRNA substrates and thereby participates in the suppression of interferon induction. The sequence is that of Nucleoprotein from Akodon azarae (Azara's grass mouse).